An 857-amino-acid polypeptide reads, in one-letter code: Glucans biosynthesis glucosyltransferase H (857 aa).

6 helical membrane passes run 142–162 (ILLT…KGIL), 196–216 (ILIL…TALM), 515–535 (VFLT…FLVL), 572–592 (LFST…ILIW), 606–626 (TLSM…RMIF), and 682–702 (FLWW…VSVI).

This sequence belongs to the glycosyltransferase 2 family. OpgH subfamily.

It is found in the cell inner membrane. Its pathway is glycan metabolism; osmoregulated periplasmic glucan (OPG) biosynthesis. In terms of biological role, involved in the biosynthesis of osmoregulated periplasmic glucans (OPGs). In Pseudomonas putida (strain W619), this protein is Glucans biosynthesis glucosyltransferase H.